A 731-amino-acid chain; its full sequence is DNA topoisomerase 1 (731 aa).

Residues 17–130 (KHLVIVESPA…KRIVFNEITP (114 aa)) form the Toprim domain. Glu-23 and Asp-96 together coordinate Mg(2+). The Topo IA-type catalytic domain maps to 144 to 569 (DTAKVNAQKA…DFYPAFSEKV (426 aa)). The interval 178-183 (SAGRVQ) is interaction with DNA. The active-site O-(5'-phospho-DNA)-tyrosine intermediate is the Tyr-312. C4-type zinc fingers lie at residues 591–617 (CSQCGDTMVKKLGRFGFFLACGKFPEC), 628–657 (CPRPACDGNIVGKKTRGRKEFYGCTRFPVC), and 670–696 (CPQCRCFLVEKSNRRVGTYTACVNPEC).

It belongs to the type IA topoisomerase family. Monomer. Mg(2+) serves as cofactor.

It catalyses the reaction ATP-independent breakage of single-stranded DNA, followed by passage and rejoining.. Functionally, releases the supercoiling and torsional tension of DNA, which is introduced during the DNA replication and transcription, by transiently cleaving and rejoining one strand of the DNA duplex. Introduces a single-strand break via transesterification at a target site in duplex DNA. The scissile phosphodiester is attacked by the catalytic tyrosine of the enzyme, resulting in the formation of a DNA-(5'-phosphotyrosyl)-enzyme intermediate and the expulsion of a 3'-OH DNA strand. The free DNA strand then undergoes passage around the unbroken strand, thus removing DNA supercoils. Finally, in the religation step, the DNA 3'-OH attacks the covalent intermediate to expel the active-site tyrosine and restore the DNA phosphodiester backbone. This chain is DNA topoisomerase 1, found in Treponema pallidum (strain Nichols).